The following is a 295-amino-acid chain: Thioredoxin-related transmembrane protein 2 (295 aa).

An N-terminal signal peptide occupies residues 1 to 48; that stretch reads MAVLAPLIALVYSVPRLSRWLARPYCLLSALLSIAFLLVRKLPPICNG. The Extracellular portion of the chain corresponds to 49–102; sequence LPTQREDGNPCDFDWREVEILMFLSAIVMMKNRRSITVEQHVGNIFMFSKVANA. A helical membrane pass occupies residues 103 to 125; it reads ILFFRLDIRMGLLYLTLCIVFLM. One can recognise a Thioredoxin domain in the interval 114-269; sequence LLYLTLCIVF…LYQRAKKHSK (156 aa). The Cytoplasmic portion of the chain corresponds to 126–295; that stretch reads TCKPPLYMGP…VPDGENKKDK (170 aa). Phosphoserine is present on residues serine 211 and serine 243. A disordered region spans residues 266–295; sequence KHSKGGDMSEEKPVDPAPTTVPDGENKKDK. Residues 269–279 are compositionally biased toward basic and acidic residues; it reads KGGDMSEEKPV. The Di-lysine motif motif lies at 292 to 295; sequence KKDK.

Monomer. Homodimer; disulfide-linked. Occurs in both reduced and oxidized monomeric form. Oxidative conditions increase homodimerization. Interacts with CANX. Interacts with ATP2A2.

It localises to the endoplasmic reticulum membrane. It is found in the mitochondrion membrane. Functionally, endoplasmic reticulum and mitochondria-associated protein that probably functions as a regulator of cellular redox state and thereby regulates protein post-translational modification, protein folding and mitochondrial activity. Indirectly regulates neuronal proliferation, migration, and organization in the developing brain. The polypeptide is Thioredoxin-related transmembrane protein 2 (Tmx2) (Mus musculus (Mouse)).